The primary structure comprises 779 residues: Cell division control protein 4 (779 aa).

Residues 39–80 form a disordered region; sequence AGTHRNSSTAKTVETEDGEEDIDEYQRKRAAGSGESTPERSD. The short motif at 82–85 is the Nuclear localization signal element; it reads KRVK. S104 is modified (phosphoserine). The region spanning 272–319 is the F-box domain; that stretch reads RDLITSLPFEISLKIFNYLQFEDIINSLGVSQNWNKIIRKSTSLWKKL. WD repeat units follow at residues 380–408, 420–449, 461–493, 528–556, 568–598, 630–658, and 669–698; these read HMTSVITCLQFEDNYVITGADDKMIRVYD, GHDGGVWALKYAHGGILVSGSTDRTVRVWD, GHNSTVRCLDIVEYKNIKYIVTGSRDNTLHVWK, GHMASVRTVSGHGNIVVSGSYDNTLIVWD, GHTDRIYSTIYDHERKRCISASMDTTIRIWD, GHTALVGLLRLSDKFLVSAAADGSIRGWD, and HHTNLSAITTFYVSDNILVSGSENQFNIYN.

As to quaternary structure, interacts with DCD53 and SKP1. Component of the SCF(CDC4) complex containing CDC53, SKP1, RBX1 and CDC4. CDC34. Interacts with CDC6 and CIC1. Interacts with SIC1; the interaction involves a SIC1 double phosphorylated motif (degron). Homodimerizes; the dimerization increases SIC1 ubiquitination in vitro.

The protein resides in the nucleus. It functions in the pathway protein modification; protein ubiquitination. Functionally, substrate recognition component of a SCF (SKP1-CUL1-F-box protein) E3 ubiquitin-protein ligase complex which mediates the ubiquitination and subsequent proteasomal degradation of target proteins. Recognizes and binds to phosphorylated target proteins. Directs ubiquitination of the phosphorylated CDK inhibitor SIC1. Involved in the degradation of CDC6 together with CDC34/UBC3 and CDC53, and in restricting the degradation of FAR1 to the nucleus. Is essential for initiation of DNA replication and separation of the spindle pole bodies to form the poles of the mitotic spindle. It also plays a role in bud development, fusion of zygotic nuclei after conjugation and various aspects of sporulation. Required for HTA1-HTB1 locus transcription activation. Required for G1/S and G2/M transition. This Saccharomyces cerevisiae (strain ATCC 204508 / S288c) (Baker's yeast) protein is Cell division control protein 4 (CDC4).